The following is a 503-amino-acid chain: MPVPPPPAPPPPPTFALANTEKPTLNKTEQAGRNALLSDISKGKKLKKTVTNDRSAPILDKPKGAGAGGGGGGFGGGGGFGGGGGGGGGGSFGGGGPPGLGGLFQAGMPKLRSTANRDNDSGGSRPPLLPPGGRSTSAKPFSPPSGPGRFPVPSPGHRSGPPEPQRNRMPPPRPDVGSKPDSIPPPVPSTPRPIQSSPHNRGSPPVPGGPRQPSPGPTPPPFPGNRGTALGGGSIRQSPLSSSSPFSNRPPLPPTPSRALDDKPPPPPPPVGNRPSIHREAVPPPPPQNNKPPVPSTPRPSASSQAPPPPPPPSRPGPPPLPPSSSGNDETPRLPQRNLSLSSSTPPLPSPGRSGPLPPPPSERPPPPVRDPPGRSGPLPPPPPVSRNGSTSRALPATPQLPSRSGVDSPRSGPRPPLPPDRPSAGAPPPPPPSTSIRNGFQDSPCEDEWESRFYFHPISDLPPPEPYVQTTKSYPSKLARNESRSGSNRRERGAPPLPPIPR.

The segment covering 1–14 (MPVPPPPAPPPPPT) has biased composition (pro residues). Residues 1-503 (MPVPPPPAPP…GAPPLPPIPR (503 aa)) are disordered. Positions 21 to 31 (EKPTLNKTEQA) are enriched in polar residues. The region spanning 32-49 (GRNALLSDISKGKKLKKT) is the WH2 domain. Arginine 33 is modified (asymmetric dimethylarginine). The tract at residues 45–48 (KLKK) is binds actin. A compositionally biased stretch (gly residues) spans 65-104 (AGAGGGGGGFGGGGGFGGGGGGGGGGSFGGGGPPGLGGLF). Over residues 121–137 (SGGSRPPLLPPGGRSTS) the composition is skewed to low complexity. 2 positions are modified to omega-N-methylarginine: arginine 125 and arginine 134. 4 stretches are compositionally biased toward pro residues: residues 141–154 (FSPP…PVPS), 161–174 (PPEP…PPRP), 182–191 (SIPPPVPSTP), and 204–223 (PPVP…PPFP). The residue at position 142 (serine 142) is a Phosphoserine. Serine 234 carries the post-translational modification Phosphoserine. Positions 238–247 (SPLSSSSPFS) are enriched in low complexity. Composition is skewed to pro residues over residues 282 to 298 (VPPP…PSTP) and 306 to 323 (APPP…PLPP). The residue at position 340 (serine 340) is a Phosphoserine. A Phosphothreonine modification is found at threonine 345. A compositionally biased stretch (pro residues) spans 346–371 (PPLPSPGRSGPLPPPPSERPPPPVRD). Serine 350 carries the post-translational modification Phosphoserine. XRSGPXPPXP motif repeat units lie at residues 352–361 (GRSGPLPPPP), 374–383 (GRSGPLPPPP), and 410–419 (PRSGPRPPLP). Residues 413–434 (GPRPPLPPDRPSAGAPPPPPPS) are compositionally biased toward pro residues. A compositionally biased stretch (basic and acidic residues) spans 480–494 (ARNESRSGSNRRERG).

This sequence belongs to the verprolin family. As to quaternary structure, binds to WAS, profilin and actin. Binds to WASL. Interacts with DBNL. Interacts with FNBP1L (via the SH3 domain). In terms of tissue distribution, highly expressed in peripheral blood mononuclear cells, spleen, placenta, small intestine, colon and thymus. Lower expression in ovary, heart, brain, lung, liver, skeletal muscle, kidney, pancreas, prostate and testis.

The protein localises to the cytoplasmic vesicle. It localises to the cytoplasm. It is found in the cytoskeleton. Its subcellular location is the cell projection. The protein resides in the ruffle. In terms of biological role, plays a role in the reorganization of the actin cytoskeleton. Contributes with NCK1 and GRB2 in the recruitment and activation of WASL. May participate in regulating the subcellular localization of WASL, resulting in the disassembly of stress fibers in favor of filopodia formation. Plays a role in the formation of cell ruffles. Plays an important role in the intracellular motility of vaccinia virus by functioning as an adapter for recruiting WASL to vaccinia virus. This Homo sapiens (Human) protein is WAS/WASL-interacting protein family member 1 (WIPF1).